A 550-amino-acid chain; its full sequence is 4-coumarate--CoA ligase-like 8 (550 aa).

The ATP site is built by S207, S208, G209, T210, T211, and K215. Residue F253 participates in (E)-4-coumaroyl-AMP binding. R274 lines the CoA pocket. The SBD1 stretch occupies residues 276–347 (DLGEMMAAVE…KKYPTVDVYQ (72 aa)). G325, Q347, G348, and T352 together coordinate (E)-4-coumaroyl-AMP. ATP contacts are provided by Q347, G348, T352, D430, and R445. An SBD2 region spans residues 348–412 (GYALTESNGA…LKGPSIAKGY (65 aa)). K447 and K451 together coordinate (E)-4-coumaroyl-AMP. Residues K453 and G454 each contribute to the CoA site. K536 is an ATP binding site. The short motif at 548 to 550 (SKI) is the Microbody targeting signal element.

Belongs to the ATP-dependent AMP-binding enzyme family. Mg(2+) is required as a cofactor.

Its subcellular location is the peroxisome. The catalysed reaction is (E)-4-coumarate + ATP + CoA = (E)-4-coumaroyl-CoA + AMP + diphosphate. The enzyme catalyses (E)-4-coumarate + ATP + H(+) = (E)-4-coumaroyl-AMP + diphosphate. It catalyses the reaction (E)-4-coumaroyl-AMP + CoA = (E)-4-coumaroyl-CoA + AMP + H(+). Its function is as follows. Carboxylate--CoA ligase that may use 4-coumarate as substrate. Follows a two-step reaction mechanism, wherein the carboxylate substrate first undergoes adenylation by ATP, followed by a thioesterification in the presence of CoA to yield the final CoA thioester. The sequence is that of 4-coumarate--CoA ligase-like 8 from Arabidopsis thaliana (Mouse-ear cress).